Here is a 110-residue protein sequence, read N- to C-terminus: Large ribosomal subunit protein uL22 (110 aa).

It belongs to the universal ribosomal protein uL22 family. In terms of assembly, part of the 50S ribosomal subunit.

This protein binds specifically to 23S rRNA; its binding is stimulated by other ribosomal proteins, e.g. L4, L17, and L20. It is important during the early stages of 50S assembly. It makes multiple contacts with different domains of the 23S rRNA in the assembled 50S subunit and ribosome. Its function is as follows. The globular domain of the protein is located near the polypeptide exit tunnel on the outside of the subunit, while an extended beta-hairpin is found that lines the wall of the exit tunnel in the center of the 70S ribosome. The protein is Large ribosomal subunit protein uL22 of Alkaliphilus metalliredigens (strain QYMF).